A 626-amino-acid polypeptide reads, in one-letter code: DNA mismatch repair protein MutL (626 aa).

The tract at residues 352–399 is disordered; sequence QPPSPSFTSRPSSAGYASGSWHPAVSSPRTEWSPQTAHPAHRPLDLGA. The span at 378-387 shows a compositional bias: polar residues; the sequence is SPRTEWSPQT.

It belongs to the DNA mismatch repair MutL/HexB family.

In terms of biological role, this protein is involved in the repair of mismatches in DNA. It is required for dam-dependent methyl-directed DNA mismatch repair. May act as a 'molecular matchmaker', a protein that promotes the formation of a stable complex between two or more DNA-binding proteins in an ATP-dependent manner without itself being part of a final effector complex. This chain is DNA mismatch repair protein MutL, found in Brucella anthropi (strain ATCC 49188 / DSM 6882 / CCUG 24695 / JCM 21032 / LMG 3331 / NBRC 15819 / NCTC 12168 / Alc 37) (Ochrobactrum anthropi).